We begin with the raw amino-acid sequence, 161 residues long: Putative ecotin-like protein (161 aa).

An N-terminal signal peptide occupies residues 1-24 (MSLRPIETAIASLTMLMLQGCAHA).

It belongs to the protease inhibitor I11 (ecotin) family.

This Methylobacillus flagellatus (strain ATCC 51484 / DSM 6875 / VKM B-1610 / KT) protein is Putative ecotin-like protein.